The primary structure comprises 92 residues: Probable acyl carrier protein (92 aa).

The Carrier domain occupies 11-92; that stretch reads QVTFEELSAL…QVNATLRTAV (82 aa). An O-(pantetheine 4'-phosphoryl)serine modification is found at Ser49.

In terms of processing, 4'-phosphopantetheine is transferred from CoA to a specific serine of the apo-ACP-like protein.

In terms of biological role, involved in developmentally regulated synthesis of a compound biosynthetically related to polyketide antibiotics which is essential for spore color in Streptomyces halstedii. The polypeptide is Probable acyl carrier protein (sch3) (Streptomyces halstedii).